The sequence spans 582 residues: Phosphoribosylaminoimidazole carboxylase (582 aa).

The ATP-grasp domain occupies 114–305 (KKYLAERGVA…QFENHLRAIL (192 aa)). An ATP-binding site is contributed by 143 to 200 (AGRLGLPLMLKAKTLAYDGRGNSPLKSASSGDIQASLKFLGDRPLYAEGWAPFVKEVA).

The protein in the C-terminal section; belongs to the AIR carboxylase family. Class I subfamily.

It catalyses the reaction 5-amino-1-(5-phospho-D-ribosyl)imidazole-4-carboxylate + H(+) = 5-amino-1-(5-phospho-beta-D-ribosyl)imidazole + CO2. The protein operates within purine metabolism; IMP biosynthesis via de novo pathway; 5-amino-1-(5-phospho-D-ribosyl)imidazole-4-carboxylate from 5-amino-1-(5-phospho-D-ribosyl)imidazole (carboxylase route): step 1/1. This chain is Phosphoribosylaminoimidazole carboxylase (ADE2), found in Cryptococcus neoformans var. neoformans serotype D (strain JEC21 / ATCC MYA-565) (Filobasidiella neoformans).